The primary structure comprises 156 residues: Transcriptional repressor NrdR (156 aa).

Residues 3–34 fold into a zinc finger; sequence CPKCNSTHSRVVDSRHADEVNAIRRRRECEEC. In terms of domain architecture, ATP-cone spans 49-139; the sequence is LIVVKKDGTR…VYKEFKDVDQ (91 aa).

It belongs to the NrdR family. Zn(2+) is required as a cofactor.

Its function is as follows. Negatively regulates transcription of bacterial ribonucleotide reductase nrd genes and operons by binding to NrdR-boxes. The sequence is that of Transcriptional repressor NrdR from Staphylococcus saprophyticus subsp. saprophyticus (strain ATCC 15305 / DSM 20229 / NCIMB 8711 / NCTC 7292 / S-41).